We begin with the raw amino-acid sequence, 166 residues long: Interferon gamma (166 aa).

A signal peptide spans 1 to 23 (MKYTSYILALQLCVLLGFSGSYG). Glutamine 24 carries the post-translational modification Pyrrolidone carboxylic acid. Residues asparagine 39 and asparagine 106 are each glycosylated (N-linked (GlcNAc...) asparagine).

The protein belongs to the type II (or gamma) interferon family. Homodimer. Interacts with IFNGR1 (via extracellular domain); this interaction promotes IFNGR1 dimerization. As to expression, released primarily from activated T lymphocytes.

The protein localises to the secreted. Functionally, type II interferon produced by immune cells such as T-cells and NK cells that plays crucial roles in antimicrobial, antiviral, and antitumor responses by activating effector immune cells and enhancing antigen presentation. Primarily signals through the JAK-STAT pathway after interaction with its receptor IFNGR1 to affect gene regulation. Upon IFNG binding, IFNGR1 intracellular domain opens out to allow association of downstream signaling components JAK2, JAK1 and STAT1, leading to STAT1 activation, nuclear translocation and transcription of IFNG-regulated genes. Many of the induced genes are transcription factors such as IRF1 that are able to further drive regulation of a next wave of transcription. Plays a role in class I antigen presentation pathway by inducing a replacement of catalytic proteasome subunits with immunoproteasome subunits. In turn, increases the quantity, quality, and repertoire of peptides for class I MHC loading. Increases the efficiency of peptide generation also by inducing the expression of activator PA28 that associates with the proteasome and alters its proteolytic cleavage preference. Up-regulates as well MHC II complexes on the cell surface by promoting expression of several key molecules such as cathepsins B/CTSB, H/CTSH, and L/CTSL. Participates in the regulation of hematopoietic stem cells during development and under homeostatic conditions by affecting their development, quiescence, and differentiation. The sequence is that of Interferon gamma (IFNG) from Cervus elaphus (Red deer).